Reading from the N-terminus, the 257-residue chain is tRNA-cytidine(32) 2-sulfurtransferase (257 aa).

The PP-loop motif motif lies at 37–42; that stretch reads SGGKDS. [4Fe-4S] cluster-binding residues include Cys112, Cys115, and Cys202.

The protein belongs to the TtcA family. As to quaternary structure, homodimer. Requires Mg(2+) as cofactor. The cofactor is [4Fe-4S] cluster.

The protein resides in the cytoplasm. The catalysed reaction is cytidine(32) in tRNA + S-sulfanyl-L-cysteinyl-[cysteine desulfurase] + AH2 + ATP = 2-thiocytidine(32) in tRNA + L-cysteinyl-[cysteine desulfurase] + A + AMP + diphosphate + H(+). The protein operates within tRNA modification. Catalyzes the ATP-dependent 2-thiolation of cytidine in position 32 of tRNA, to form 2-thiocytidine (s(2)C32). The sulfur atoms are provided by the cysteine/cysteine desulfurase (IscS) system. In Geobacter metallireducens (strain ATCC 53774 / DSM 7210 / GS-15), this protein is tRNA-cytidine(32) 2-sulfurtransferase.